Here is a 43-residue protein sequence, read N- to C-terminus: Peroxidase (43 aa).

It belongs to the peroxidase family. Classical plant (class III) peroxidase subfamily. It depends on Ca(2+) as a cofactor. The cofactor is heme b.

The catalysed reaction is 2 a phenolic donor + H2O2 = 2 a phenolic radical donor + 2 H2O. In terms of biological role, removal of H(2)O(2), oxidation of toxic reductants, biosynthesis and degradation of lignin, suberization, auxin catabolism, response to environmental stresses such as wounding, pathogen attack and oxidative stress. These functions might be dependent on each isozyme/isoform in each plant tissue. In Cynara cardunculus var. scolymus (Globe artichoke), this protein is Peroxidase.